The primary structure comprises 435 residues: tRNA-2-methylthio-N(6)-dimethylallyladenosine synthase (435 aa).

The MTTase N-terminal domain maps to 1–117; the sequence is MKYFIKTYGC…MPKLLEDVKV (117 aa). The [4Fe-4S] cluster site is built by Cys-10, Cys-46, Cys-80, Cys-156, Cys-160, and Cys-163. Residues 142-370 enclose the Radical SAM core domain; that stretch reads RDNSYCAYVT…LEIQKAITSK (229 aa). In terms of domain architecture, TRAM spans 373–433; the sequence is QRYKNTVQKV…FQSLDGVVQN (61 aa).

The protein belongs to the methylthiotransferase family. MiaB subfamily. As to quaternary structure, monomer. [4Fe-4S] cluster is required as a cofactor.

The protein resides in the cytoplasm. The enzyme catalyses N(6)-dimethylallyladenosine(37) in tRNA + (sulfur carrier)-SH + AH2 + 2 S-adenosyl-L-methionine = 2-methylsulfanyl-N(6)-dimethylallyladenosine(37) in tRNA + (sulfur carrier)-H + 5'-deoxyadenosine + L-methionine + A + S-adenosyl-L-homocysteine + 2 H(+). Catalyzes the methylthiolation of N6-(dimethylallyl)adenosine (i(6)A), leading to the formation of 2-methylthio-N6-(dimethylallyl)adenosine (ms(2)i(6)A) at position 37 in tRNAs that read codons beginning with uridine. In Hydrogenobaculum sp. (strain Y04AAS1), this protein is tRNA-2-methylthio-N(6)-dimethylallyladenosine synthase.